The primary structure comprises 325 residues: Xylosidase/arabinosidase (325 aa).

The Proton acceptor role is filled by Asp16. Glu224 (proton donor) is an active-site residue.

The protein belongs to the glycosyl hydrolase 43 family.

It catalyses the reaction Hydrolysis of (1-&gt;4)-beta-D-xylans, to remove successive D-xylose residues from the non-reducing termini.. The enzyme catalyses Hydrolysis of terminal non-reducing alpha-L-arabinofuranoside residues in alpha-L-arabinosides.. This chain is Xylosidase/arabinosidase (xsa), found in Bacteroides ovatus.